We begin with the raw amino-acid sequence, 152 residues long: SUZ RNA-binding domain-containing (152 aa).

Methionine 1 is modified (N-acetylmethionine). The disordered stretch occupies residues 30 to 152; sequence TQKESRKSKS…DGSQGFKQRR (123 aa). Serine 37, serine 39, and serine 51 each carry phosphoserine. One can recognise an SUZ domain in the interval 42-107; that stretch reads KVPIVIQDDS…ARKRILGSAS (66 aa). Residues 66 to 81 are compositionally biased toward polar residues; the sequence is PTSNGVVSSPNSTSRP. Residues 89 to 100 are compositionally biased toward basic and acidic residues; the sequence is AQREAEYAEARK. Residues serine 105 and serine 107 each carry the phosphoserine modification. One can recognise an SUZ-C domain in the interval 111–152; sequence EQEKPILDRPTRISQPEDSRQPNNVIRQPLGPDGSQGFKQRR. A compositionally biased stretch (basic and acidic residues) spans 113–130; that stretch reads EKPILDRPTRISQPEDSR.

It belongs to the SZRD1 family.

This chain is SUZ RNA-binding domain-containing (SZRD1), found in Homo sapiens (Human).